Consider the following 273-residue polypeptide: MTGTTENDNTGEDEKPKDEECAAIEHKDKFNPTAYLNSFYKTASEDTAMQIVLFFLPGILYRLPQKVRSVLDLGAGPTVYLPISLRDRAENIYTSDYAPANRDTLINWIEDKSDFDWDNVCSWIANIEASMETGKQMQNKTRKLMRAVLDVNVHESPVVQSIVWKENEQVQVPDKFQVVSTVFCLEYSCETLEAYFRAVRSACSLIDEGGILIQGGVLDATTYNFGGKTFRCHRLKQAHIIESLKANGMATTAEQGYKFITHDDIFLLVSKKL.

Residues tyrosine 35, tyrosine 40, 74 to 75 (GA), tyrosine 80, aspartate 96, asparagine 101, and 152 to 153 (NV) each bind S-adenosyl-L-methionine.

Belongs to the class I-like SAM-binding methyltransferase superfamily. NNMT/PNMT/TEMT family.

It carries out the reaction nicotinamide + S-adenosyl-L-methionine = 1-methylnicotinamide + S-adenosyl-L-homocysteine. Functionally, catalyzes the N-methylation of nicotinamide and other pyridines to form pyridinium ions. Involved in regulation of lifespan extension downstream of the sirtuin sir-2.1, probably through its role in nicotinic acid metabolism. In Caenorhabditis elegans, this protein is Nicotinamide N-methyltransferase.